A 180-amino-acid chain; its full sequence is Oligoribonuclease (180 aa).

An Exonuclease domain is found at 7–170 (LIWIDLEMTG…DDIRESIAEL (164 aa)). Residue Y128 is part of the active site.

This sequence belongs to the oligoribonuclease family.

It localises to the cytoplasm. 3'-to-5' exoribonuclease specific for small oligoribonucleotides. The polypeptide is Oligoribonuclease (Pseudomonas fluorescens (strain Pf0-1)).